The chain runs to 341 residues: Ribosomal RNA small subunit methyltransferase H (341 aa).

S-adenosyl-L-methionine-binding positions include 47–49 (GGY), Asp64, Phe91, Asp109, and Gln116.

It belongs to the methyltransferase superfamily. RsmH family.

It localises to the cytoplasm. The catalysed reaction is cytidine(1402) in 16S rRNA + S-adenosyl-L-methionine = N(4)-methylcytidine(1402) in 16S rRNA + S-adenosyl-L-homocysteine + H(+). Functionally, specifically methylates the N4 position of cytidine in position 1402 (C1402) of 16S rRNA. The chain is Ribosomal RNA small subunit methyltransferase H from Rhizobium leguminosarum bv. trifolii (strain WSM2304).